The primary structure comprises 1196 residues: MAPVYEGMASHVQVFSPHTLQSSAFCSVKKLKVEPSSNWDMTGYGSHSKVYSQSKNIPPSQPASTTVSTSLPIPNPSLPYEQTIIFPGSTGHIVVTSASSTSVTGQVLGGPHNLMRRSTVSLLDTYQKCGLKRKSEEIENTSSVQIIEEHPPMIQNNASGATVATATTSTATSKNSGSNSEGDYQLVQHEVLCSMTNTYEVLEFLGRGTFGQVVKCWKRGTNEIVAIKILKNHPSYARQGQIEVSILARLSTESADDYNFVRAYECFQHKNHTCLVFEMLEQNLYDFLKQNKFSPLPLKYIRPVLQQVATALMKLKSLGLIHADLKPENIMLVDPSRQPYRVKVIDFGSASHVSKAVCSTYLQSRYYRAPEIILGLPFCEAIDMWSLGCVIAELFLGWPLYPGASEYDQIRYISQTQGLPAEYLLSAGTKTTRFFNRDTDSPYPLWRLKTPDDHEAETGIKSKEARKYIFNCLDDMAQVNMTTDLEGSDMLVEKADRREFIDLLKKMLTIDADKRVTPIETLNHPFVTMTHLLDFPHSAHVKSCFQNMEICKRRVNMYDTVNQSKTPFITHVAPSTSTNLTMTFNNQLTTVHNQAPTTSSATLSLANPEVSILNYQSALYQPSAASMAAVAPRSMPLQTGTAQICARPDPFQQALIVCPPGFQGLQASPSKHAGYSVRMENAVPIVTQAPGAQPLQIQPGLLAQQAWPGGAQQILLPPAWQQLTGVATHTSVQHAAVIPETMAGTQQLADWRNTHAHGSHYNPIMQQPALLTGHVTLPAAQPLNVGVAHVMRQQPTSTTSSRKSKQHQSSVRNVSTCEVTSSQAISSPQRSKRVKENTPPRCAMVHSSPACSTSVTCGWGDVASSTTRERQRQTIVIPDTPSPTVSVITISSDTDEEEEQKHAPTSTVSKQRKNVISCVTVHDSPYSDSSSNTSPYSVQQRTGHNGTNTLDTKGGLENHCTGNPRTIIVPPLKTQASEVLVECDSLGPAISASHHSSSFKSKSSSTVTSTSGHSSGSSSGAIAYRQQRPGPHFQQQQPLNLSQAQQHMAADRTGSHRRQQAYITPTMAQAPYTFPHNSPSHGTVHPHLAAAAHLPTQPHLYTYTAPTALGSTGTVAHLVASQGSARHTVQHTAYPASIVHQVPVSMGPRVLPSPTIHPSQYPAQFAHQTYISASPASTVYTGYPLSPAKVNQYPYI.

Position 16 is a phosphoserine (serine 16). Residue lysine 32 forms a Glycyl lysine isopeptide (Lys-Gly) (interchain with G-Cter in SUMO); alternate linkage. Lysine 32 is covalently cross-linked (Glycyl lysine isopeptide (Lys-Gly) (interchain with G-Cter in SUMO2); alternate). The tract at residues valine 50 to threonine 69 is disordered. Residues serine 97–leucine 230 are transcriptional corepression. Phosphoserine occurs at positions 118 and 135. Phosphothreonine is present on threonine 141. Positions histidine 189–glutamate 520 are interaction with DAXX. A Protein kinase domain is found at tyrosine 199–valine 527. ATP-binding positions include leucine 205 to valine 213 and lysine 228. A phosphothreonine mark is found at threonine 252 and threonine 273. The active-site Proton acceptor is the aspartate 324. Position 361 is a phosphotyrosine; by autocatalysis (tyrosine 361). Serine 441 is modified (phosphoserine). Threonine 482, threonine 517, and threonine 566 each carry phosphothreonine. An interaction with SKI and SMAD1 region spans residues alanine 539 to methionine 844. The interval serine 600–serine 800 is interaction with DAZAP2. Residues serine 634 and serine 668 each carry the phosphoserine modification. Position 687 is a phosphothreonine (threonine 687). The interaction with POU4F1 stretch occupies residues arginine 752–glutamate 897. The interval histidine 774–valine 876 is interaction with CTBP1. The interval valine 787 to glutamate 897 is interaction with HMGA1. Disordered regions lie at residues arginine 792 to serine 847 and serine 891 to asparagine 963. Over residues glutamine 793–glutamine 829 the composition is skewed to polar residues. The Nuclear localization signal 1 (NLS1) motif lies at arginine 802–lysine 805. Phosphoserine is present on residues serine 815 and serine 827. The Nuclear localization signal 2 (NLS2) signature appears at lysine 832–lysine 835. The interaction with TP53 and TP73 stretch occupies residues proline 839–serine 934. An interaction with UBE2I region spans residues glutamine 873–threonine 907. Residues glutamine 873–leucine 980 are localization to nuclear speckles. Residues glutamine 873 to leucine 980 are required for localization to nuclear speckles. Residues threonine 884–valine 908 are SUMO interaction motifs (SIM); required for nuclear localization and kinase activity. Positions aspartate 923–serine 937 are enriched in low complexity. Phosphoserine is present on serine 934. The tract at residues proline 935–alanine 1050 is interaction with AXIN1. The span at valine 938–aspartate 951 shows a compositional bias: polar residues. Residues lysine 953 and lysine 973 each participate in a glycyl lysine isopeptide (Lys-Gly) (interchain with G-Cter in SUMO2) cross-link. The segment at aspartate 984–isoleucine 1196 is autoinhibitory domain (AID). 5 positions are modified to phosphoserine: serine 991, serine 993, serine 1042, serine 1153, and serine 1186. Positions serine 991 to glutamine 1046 are enriched in low complexity. The tract at residues serine 991 to arginine 1058 is disordered. A Glycyl lysine isopeptide (Lys-Gly) (interchain with G-Cter in SUMO) cross-link involves residue lysine 1189.

It belongs to the protein kinase superfamily. CMGC Ser/Thr protein kinase family. HIPK subfamily. Interacts with CREB1, SIAH1, WSB1, CBX4, TRADD, p53/TP53, TP73, TP63, CREBBP, DAXX, P53DINP1, SKI, SMAD1, SMAD2 and SMAD3, but not SMAD4. Interacts with SP100; positively regulates TP53-dependent transcription. Interacts with ATF1, PML, RUNX1, EP300, NKX1-2, NKX2-5, UBE2I, HMGA1, CTBP1, AXIN1, NLK, MYB, POU4F1, POU4F2, POU4F3, UBE2I, UBL1 and ZBTB4. Probably part of a complex consisting of p53/TP53, HIPK2 and AXIN1. Interacts with DAZAP2; the interaction results in phosphorylation of DAZAP2 which causes localization of DAZAP2 to the nucleus, reduces interaction of DAZAP2 with HIPK2 and prevents DAZAP2-dependent degradation of HIPK2. Interacts with SIAH1; the interaction is promoted by DAZAP2 and results in SIAH1-mediated ubiquitination and subsequent proteasomal degradation of HIPK2. In terms of assembly, interacts with SPN/CD43 cytoplasmic tail. Post-translationally, sumoylated. When conjugated it is directed to nuclear speckles. Desumoylated by SENP1. Sumoylation on Lys-32 is promoted by the E3 SUMO-protein ligase CBX4. In terms of processing, autophosphorylation at Tyr-361 in the activation loop activates the kinase and promotes nuclear localization. Ubiquitinated by FBXO3, WSB1 and SIAH1, leading to rapid proteasome-dependent degradation. The degradation mediated by FBXO3, but not ubiquitination, is prevented in the presence of PML. The degradation mediated by WSB1 and SIAH1 is reversibly reduced upon DNA damage. Post-translationally, cleaved at Asp-923 and Asp-984 by CASP6 in a p53/TP53-dependent manner. The cleaved form lacks the autoinhibitory C-terminal domain (AID), resulting in a hyperactive kinase, which potentiates p53/TP53 Ser-46 phosphorylation and subsequent activation of the cell death machinery. In terms of tissue distribution, ubiquitous. Abundant in muscle, heart, small intestine, stomach, kidney and brain; and low in testis, skin and lung.

It is found in the nucleus. The protein localises to the PML body. It localises to the cytoplasm. It carries out the reaction L-seryl-[protein] + ATP = O-phospho-L-seryl-[protein] + ADP + H(+). It catalyses the reaction L-threonyl-[protein] + ATP = O-phospho-L-threonyl-[protein] + ADP + H(+). In terms of biological role, serine/threonine-protein kinase involved in transcription regulation, p53/TP53-mediated cellular apoptosis and regulation of the cell cycle. Acts as a corepressor of several transcription factors, including SMAD1 and POU4F1/Brn3a and probably NK homeodomain transcription factors. Phosphorylates PDX1, ATF1, PML, p53/TP53, CREB1, CTBP1, CBX4, RUNX1, EP300, CTNNB1, HMGA1, ZBTB4 and DAZAP2. Inhibits cell growth and promotes apoptosis through the activation of p53/TP53 both at the transcription level and at the protein level (by phosphorylation and indirect acetylation). The phosphorylation of p53/TP53 may be mediated by a p53/TP53-HIPK2-AXIN1 complex. Involved in the response to hypoxia by acting as a transcriptional co-suppressor of HIF1A. Mediates transcriptional activation of TP73. In response to TGFB, cooperates with DAXX to activate JNK. Negative regulator through phosphorylation and subsequent proteasomal degradation of CTNNB1 and the antiapoptotic factor CTBP1. In the Wnt/beta-catenin signaling pathway acts as an intermediate kinase between MAP3K7/TAK1 and NLK to promote the proteasomal degradation of MYB. Phosphorylates CBX4 upon DNA damage and promotes its E3 SUMO-protein ligase activity. Activates CREB1 and ATF1 transcription factors by phosphorylation in response to genotoxic stress. In response to DNA damage, stabilizes PML by phosphorylation. PML, HIPK2 and FBXO3 may act synergically to activate p53/TP53-dependent transactivation. Promotes angiogenesis, and is involved in erythroid differentiation, especially during fetal liver erythropoiesis. Phosphorylation of RUNX1 and EP300 stimulates EP300 transcription regulation activity. Triggers ZBTB4 protein degradation in response to DNA damage. In response to DNA damage, phosphorylates DAZAP2 which localizes DAZAP2 to the nucleus, reduces interaction of DAZAP2 with HIPK2 and prevents DAZAP2-dependent ubiquitination of HIPK2 by E3 ubiquitin-protein ligase SIAH1 and subsequent proteasomal degradation. Modulates HMGA1 DNA-binding affinity. In response to high glucose, triggers phosphorylation-mediated subnuclear localization shifting of PDX1. Involved in the regulation of eye size, lens formation and retinal lamination during late embryogenesis. The polypeptide is Homeodomain-interacting protein kinase 2 (Hipk2) (Mus musculus (Mouse)).